A 328-amino-acid polypeptide reads, in one-letter code: uncharacterized protein (328 aa).

The signal sequence occupies residues 1–25 (MKLFNFKKLSMLIAGFTLVTSPALA).

The protein belongs to the bacterial solute-binding protein 7 family.

The protein localises to the periplasm. This is an uncharacterized protein from Haemophilus influenzae (strain ATCC 51907 / DSM 11121 / KW20 / Rd).